Here is a 429-residue protein sequence, read N- to C-terminus: CBL-interacting serine/threonine-protein kinase 7 (429 aa).

In terms of domain architecture, Protein kinase spans 25–280 (YELGRRLGSG…IETVMKTNWF (256 aa)). Residues 31 to 39 (LGSGSFAKV) and Lys54 each bind ATP. The active-site Proton acceptor is the Asp149. The tract at residues 167–195 (DFGLSALPEHLQNGLLHTACGTPAYTAPE) is activation loop. Ser171 is modified (phosphoserine). Thr184 is subject to Phosphothreonine. The NAF domain occupies 302–326 (SSVNSITAFDLISLSSGLDLSGLFE). Residues 330 to 363 (KKERRFTAKVSGVEVEEKAKMIGEKLGYVVKKKM) are PPI.

Belongs to the protein kinase superfamily. CAMK Ser/Thr protein kinase family. SNF1 subfamily. Interacts with CBL1, CBL2 and CBL3. Mn(2+) is required as a cofactor. Post-translationally, autophosphorylated. In terms of tissue distribution, strongly expressed in leaves, but barely expressed in roots, stems or flowers.

The enzyme catalyses L-seryl-[protein] + ATP = O-phospho-L-seryl-[protein] + ADP + H(+). The catalysed reaction is L-threonyl-[protein] + ATP = O-phospho-L-threonyl-[protein] + ADP + H(+). CIPK serine-threonine protein kinases interact with CBL proteins. Binding of a CBL protein to the regulatory NAF domain of CIPK protein lead to the activation of the kinase in a calcium-dependent manner. Phosphorylates the rice sucrose synthase (SuSy) in vitro in an allosteric manner. Involved in cold response. This chain is CBL-interacting serine/threonine-protein kinase 7 (CIPK7), found in Arabidopsis thaliana (Mouse-ear cress).